A 1122-amino-acid polypeptide reads, in one-letter code: Transcription-repair-coupling factor (1122 aa).

The Helicase ATP-binding domain maps to 593 to 758 (DLRNGMLMDR…MTGLKELSII (166 aa)). Position 606–613 (606–613 (GDVGFGKT)) interacts with ATP. Positions 711–714 (DEEQ) match the DEEQ box motif. The region spanning 779–933 (IIRDALLREH…GFTIASRDMD (155 aa)) is the Helicase C-terminal domain.

The protein in the N-terminal section; belongs to the UvrB family. In the C-terminal section; belongs to the helicase family. RecG subfamily.

The protein resides in the cytoplasm. Functionally, couples transcription and DNA repair by recognizing RNA polymerase (RNAP) stalled at DNA lesions. Mediates ATP-dependent release of RNAP and its truncated transcript from the DNA, and recruitment of nucleotide excision repair machinery to the damaged site. In Rickettsia conorii (strain ATCC VR-613 / Malish 7), this protein is Transcription-repair-coupling factor.